The primary structure comprises 235 residues: Serine protease SplA (235 aa).

The signal sequence occupies residues 1-35; it reads MNKNVMVKGLTALTILTSLGFAENISNQPHSIAKA. Residues His-74, Asp-113, and Ser-189 each act as charge relay system in the active site.

This sequence belongs to the peptidase S1B family.

The protein resides in the secreted. The polypeptide is Serine protease SplA (splA) (Staphylococcus aureus (strain USA300)).